A 397-amino-acid polypeptide reads, in one-letter code: Phosphoglycerate kinase (397 aa).

Substrate-binding positions include 21–23 (DFN), R37, 60–63 (HLGR), R119, and R152. Residues K203, G294, E325, and 354-357 (GGDS) contribute to the ATP site.

It belongs to the phosphoglycerate kinase family. In terms of assembly, monomer.

The protein resides in the cytoplasm. The catalysed reaction is (2R)-3-phosphoglycerate + ATP = (2R)-3-phospho-glyceroyl phosphate + ADP. Its pathway is carbohydrate degradation; glycolysis; pyruvate from D-glyceraldehyde 3-phosphate: step 2/5. This Chlorobium chlorochromatii (strain CaD3) protein is Phosphoglycerate kinase.